A 645-amino-acid chain; its full sequence is Cilia- and flagella-associated protein 221 homolog (645 aa).

Residues 381 to 408 form a disordered region; that stretch reads GGAVHQPSAPVGSSSSGGGGGSDPAFKP. Positions 428-435 are interaction with calmodulin; it reads THQRLQRR.

Belongs to the PCDP1 family. In terms of assembly, interacts with calmodulin; calcium-dependent. Part of the PDCP1 complex composed of CFAP46, CFAP54, CFAP74 and CFAP221; the PDCP1 complex binds calmodulin.

Its subcellular location is the cytoplasm. It is found in the cytoskeleton. The protein resides in the cilium axoneme. Functionally, may play a role in cilium morphogenesis. The polypeptide is Cilia- and flagella-associated protein 221 homolog (Chlamydomonas reinhardtii (Chlamydomonas smithii)).